A 122-amino-acid polypeptide reads, in one-letter code: UPF0145 protein TV0671 (122 aa).

It belongs to the UPF0145 family.

The protein is UPF0145 protein TV0671 of Thermoplasma volcanium (strain ATCC 51530 / DSM 4299 / JCM 9571 / NBRC 15438 / GSS1).